We begin with the raw amino-acid sequence, 85 residues long: UPF0297 protein CHY_0540 (85 aa).

Belongs to the UPF0297 family.

The protein is UPF0297 protein CHY_0540 of Carboxydothermus hydrogenoformans (strain ATCC BAA-161 / DSM 6008 / Z-2901).